We begin with the raw amino-acid sequence, 419 residues long: GTPase Obg (419 aa).

The 158-residue stretch at 2–159 (SAFVDAVTVE…FLAKVELQVL (158 aa)) folds into the Obg domain. Residues 160 to 325 (ADVGLLGYPN…LKYEIATTLK (166 aa)) form the OBG-type G domain. GTP-binding positions include 166–173 (GYPNVGKS), 191–195 (FTTLS), 212–215 (DLPG), 279–282 (NKMD), and 306–308 (SAL). The Mg(2+) site is built by S173 and T193. The region spanning 341 to 419 (LNAEDAVDFI…IFSYEFEYLE (79 aa)) is the OCT domain.

Belongs to the TRAFAC class OBG-HflX-like GTPase superfamily. OBG GTPase family. In terms of assembly, monomer. It depends on Mg(2+) as a cofactor.

The protein resides in the cytoplasm. In terms of biological role, an essential GTPase which binds GTP, GDP and possibly (p)ppGpp with moderate affinity, with high nucleotide exchange rates and a fairly low GTP hydrolysis rate. Plays a role in control of the cell cycle, stress response, ribosome biogenesis and in those bacteria that undergo differentiation, in morphogenesis control. This chain is GTPase Obg, found in Acholeplasma laidlawii (strain PG-8A).